We begin with the raw amino-acid sequence, 310 residues long: 4-hydroxyproline 2-epimerase (310 aa).

Cys-88 functions as the Proton acceptor in the catalytic mechanism. Residues 89–90 (GH), His-208, and Asp-232 each bind substrate. Catalysis depends on Cys-236, which acts as the Proton donor. Position 237 to 238 (237 to 238 (GT)) interacts with substrate.

The protein belongs to the proline racemase family.

It carries out the reaction trans-4-hydroxy-L-proline = cis-4-hydroxy-D-proline. In terms of biological role, catalyzes the epimerization of trans-4-hydroxy-L-proline (t4LHyp) to cis-4-hydroxy-D-proline (c4DHyp). Is likely involved in a degradation pathway that converts t4LHyp to alpha-ketoglutarate. Displays no proline racemase activity. In Pseudomonas fluorescens (strain ATCC BAA-477 / NRRL B-23932 / Pf-5), this protein is 4-hydroxyproline 2-epimerase.